A 490-amino-acid chain; its full sequence is MFSFDALLQAIARQTVLCVGDLMLDEFVYGEVSRISPEAPAPVIAVQRSETNIGGAGNVARNIAAIGARCIFVGLIGDDATGRFLESELGSESRIEPVLVCDGSRPTTRKVRFVSEHFSTHMLRADWETASPAAADIEQRLLDAILPQLARADIVLLSDYAKGVLTARVIRDTIDAAKKLGKRVIVDPKSANFAIYRGATLLTPNRKEFTAATRSAAATDDEIAAAAQDAMALAECEAMLVTKSEHGMTLVPRGGEPIHVPALPVKVRDVSGAGDTVAAVLAVVLASGANWATAMRAASAAAAVAVSKNGTAVVTPAELRRRILPHASLAAEEKIIGSDEELDERLKQWRREGLRVGFTNGCFDILHPGHVKVLTAARGACDRLIVGLNSDASVRRLKGESRPVQHERARAEVLAALEAVDLVAIFEEDTPLRLITRIEPSVLVKGGDYTREQVVGHEIVAAKGGDVLLVDVLPGFSTTSLVARAREGQS.

Residues 1–330 are ribokinase; the sequence is MFSFDALLQA…RRILPHASLA (330 aa). 205 to 208 provides a ligand contact to ATP; it reads NRKE. The active site involves aspartate 275. A cytidylyltransferase region spans residues 358 to 490; it reads FTNGCFDILH…LVARAREGQS (133 aa).

The protein in the N-terminal section; belongs to the carbohydrate kinase PfkB family. It in the C-terminal section; belongs to the cytidylyltransferase family. As to quaternary structure, homodimer.

The enzyme catalyses D-glycero-beta-D-manno-heptose 7-phosphate + ATP = D-glycero-beta-D-manno-heptose 1,7-bisphosphate + ADP + H(+). The catalysed reaction is D-glycero-beta-D-manno-heptose 1-phosphate + ATP + H(+) = ADP-D-glycero-beta-D-manno-heptose + diphosphate. Its pathway is nucleotide-sugar biosynthesis; ADP-L-glycero-beta-D-manno-heptose biosynthesis; ADP-L-glycero-beta-D-manno-heptose from D-glycero-beta-D-manno-heptose 7-phosphate: step 1/4. The protein operates within nucleotide-sugar biosynthesis; ADP-L-glycero-beta-D-manno-heptose biosynthesis; ADP-L-glycero-beta-D-manno-heptose from D-glycero-beta-D-manno-heptose 7-phosphate: step 3/4. Catalyzes the phosphorylation of D-glycero-D-manno-heptose 7-phosphate at the C-1 position to selectively form D-glycero-beta-D-manno-heptose-1,7-bisphosphate. Functionally, catalyzes the ADP transfer from ATP to D-glycero-beta-D-manno-heptose 1-phosphate, yielding ADP-D-glycero-beta-D-manno-heptose. This chain is Bifunctional protein HldE, found in Rhodopseudomonas palustris (strain ATCC BAA-98 / CGA009).